A 518-amino-acid chain; its full sequence is MIIYREENEIIKKALENLNIPDRVYIFDTTLRDGEQTPGVSLTPEEKIDIAIKLDDLGVDVIEAGFPVSSLGEQEAIKKICSLNLDAEICGLARAVKKDIDVAIDCGVDRIHTFIATSPLHRKYKLKKSKEEIIDIAVDAIEYIKEHGIRVEFSAEDATRTEIDYLIEVYKKAVDAGADIINVPDTVGVMIPRAMYYLINELKKEIKVPISVHCHNDFGLAVANSLAAVEAGAEQVHCTINGLGERGGNAALEEVVMSLMSIYGVKTNIKTQKLYEISQLVSKYTEIKVQPNKAIVGENAFAHESGIHAHGVLAHALTYEPIPPELVGQKRKIILGKHTGTHAIEAKLKELGIEVGKDINKDQFDEIVKRIKALGDKGKRVTDRDVEAIVEDVVGKLAKKDRVVELEQIAVMTGNRVIPTASVALKIEEEIKKSSAIGVGPVDAAVKAIQKAIGEKIKLKEYHINAITGGTDALAEVIVTLEGYGREITTKAASEDIVRASVEAVIDGINKILAKREK.

In terms of domain architecture, Pyruvate carboxyltransferase spans 24-275 (VYIFDTTLRD…KTNIKTQKLY (252 aa)). Residues aspartate 33, histidine 213, histidine 215, and asparagine 249 each coordinate a divalent metal cation.

Belongs to the alpha-IPM synthase/homocitrate synthase family. Homodimer. Requires a divalent metal cation as cofactor.

It carries out the reaction 3-methyl-2-oxobutanoate + acetyl-CoA + H2O = (2S)-2-isopropylmalate + CoA + H(+). It functions in the pathway amino-acid biosynthesis; L-leucine biosynthesis; L-leucine from 3-methyl-2-oxobutanoate: step 1/4. Its function is as follows. Catalyzes the condensation of the acetyl group of acetyl-CoA with 3-methyl-2-oxobutanoate (2-oxoisovalerate) to form 3-carboxy-3-hydroxy-4-methylpentanoate (2-isopropylmalate). The chain is 2-isopropylmalate synthase (leuA) from Methanocaldococcus jannaschii (strain ATCC 43067 / DSM 2661 / JAL-1 / JCM 10045 / NBRC 100440) (Methanococcus jannaschii).